The following is a 130-amino-acid chain: Small ribosomal subunit protein uS11c (130 aa).

It belongs to the universal ribosomal protein uS11 family. Part of the 30S ribosomal subunit.

The protein localises to the plastid. Its subcellular location is the chloroplast. The protein is Small ribosomal subunit protein uS11c of Chlorella vulgaris (Green alga).